A 290-amino-acid polypeptide reads, in one-letter code: Thymidylate synthase (290 aa).

Arg31 lines the dUMP pocket. (6R)-5,10-methylene-5,6,7,8-tetrahydrofolate is bound at residue His61. A dUMP-binding site is contributed by 152-153; it reads RR. The Nucleophile role is filled by Cys172. Residues 192 to 195, Asn203, and 233 to 235 each bind dUMP; these read RSAD and HIY. Asp195 is a (6R)-5,10-methylene-5,6,7,8-tetrahydrofolate binding site. (6R)-5,10-methylene-5,6,7,8-tetrahydrofolate is bound at residue Ala289.

This sequence belongs to the thymidylate synthase family. Bacterial-type ThyA subfamily. In terms of assembly, homodimer.

The protein resides in the cytoplasm. The enzyme catalyses dUMP + (6R)-5,10-methylene-5,6,7,8-tetrahydrofolate = 7,8-dihydrofolate + dTMP. The protein operates within pyrimidine metabolism; dTTP biosynthesis. In terms of biological role, catalyzes the reductive methylation of 2'-deoxyuridine-5'-monophosphate (dUMP) to 2'-deoxythymidine-5'-monophosphate (dTMP) while utilizing 5,10-methylenetetrahydrofolate (mTHF) as the methyl donor and reductant in the reaction, yielding dihydrofolate (DHF) as a by-product. This enzymatic reaction provides an intracellular de novo source of dTMP, an essential precursor for DNA biosynthesis. In Psychrobacter cryohalolentis (strain ATCC BAA-1226 / DSM 17306 / VKM B-2378 / K5), this protein is Thymidylate synthase.